Here is a 301-residue protein sequence, read N- to C-terminus: 2-methoxy-6-polyprenyl-1,4-benzoquinol methylase, mitochondrial (301 aa).

Residues 1 to 16 constitute a mitochondrion transit peptide; sequence MQTTRSTRLLSLARRF. Positions 20–31 are enriched in polar residues; sequence RTASQSAQNSKG. Residues 20–44 form a disordered region; sequence RTASQSAQNSKGMASGAESISGKEK. S-adenosyl-L-methionine is bound by residues Thr-111, Asp-139, and 173–174; that span reads DA.

This sequence belongs to the class I-like SAM-binding methyltransferase superfamily. MenG/UbiE family. In terms of assembly, component of a multi-subunit COQ enzyme complex.

Its subcellular location is the mitochondrion inner membrane. The catalysed reaction is a 2-methoxy-6-(all-trans-polyprenyl)benzene-1,4-diol + S-adenosyl-L-methionine = a 5-methoxy-2-methyl-3-(all-trans-polyprenyl)benzene-1,4-diol + S-adenosyl-L-homocysteine + H(+). Its pathway is cofactor biosynthesis; ubiquinone biosynthesis. Methyltransferase required for the conversion of 2-polyprenyl-6-methoxy-1,4-benzoquinol (DDMQH2) to 2-polyprenyl-3-methyl-6-methoxy-1,4-benzoquinol (DMQH2). In Drosophila melanogaster (Fruit fly), this protein is 2-methoxy-6-polyprenyl-1,4-benzoquinol methylase, mitochondrial.